Reading from the N-terminus, the 355-residue chain is Methionine import ATP-binding protein MetN 1 (355 aa).

The ABC transporter domain maps to 6-245; sequence IDLKDIAVTF…PKAPLTVDFV (240 aa). 42–49 provides a ligand contact to ATP; the sequence is GYSGAGKS.

The protein belongs to the ABC transporter superfamily. Methionine importer (TC 3.A.1.24) family. The complex is composed of two ATP-binding proteins (MetN), two transmembrane proteins (MetI) and a solute-binding protein (MetQ).

It is found in the cell membrane. The catalysed reaction is L-methionine(out) + ATP + H2O = L-methionine(in) + ADP + phosphate + H(+). It catalyses the reaction D-methionine(out) + ATP + H2O = D-methionine(in) + ADP + phosphate + H(+). Part of the ABC transporter complex MetNIQ involved in methionine import. Responsible for energy coupling to the transport system. This chain is Methionine import ATP-binding protein MetN 1, found in Lactiplantibacillus plantarum (strain ATCC BAA-793 / NCIMB 8826 / WCFS1) (Lactobacillus plantarum).